Reading from the N-terminus, the 529-residue chain is Pre-rRNA-processing protein pro-1 (529 aa).

WD repeat units follow at residues 136–175 and 287–326; these read AHYQNITKIVISDDDSMIFTASKDGAVHGYLVTDLVSADR and GHSDEISRLAINTDGTLLASGDASGKYCIWEISSHQCLKV. Positions 416–518 form a coiled coil; sequence ARNEAAKAEK…LKEINKQMYE (103 aa). Positions 436–470 are disordered; that stretch reads TLGDDEDDAPEVGNQRRKSGKKNKKNRKNQKKNDF. Residues 450–465 show a composition bias toward basic residues; the sequence is QRRKSGKKNKKNRKNQ.

It belongs to the WD repeat IPI3/WDR18 family. Component of the PELP1 complex, composed of at least PELP1, TEX10 and WDR18. The complex interacts with pre-60S ribosome particles.

It is found in the nucleus. It localises to the nucleolus. The protein resides in the nucleoplasm. In terms of biological role, component of the PELP1 complex involved in the nucleolar steps of 28S rRNA maturation and the subsequent nucleoplasmic transit of the pre-60S ribosomal subunit. Required for processing ITS2 sequences from rRNA intermediates during 26S rRNA maturation. Required in the soma to promote normal proliferation and prevent germline tumor formation. The protein is Pre-rRNA-processing protein pro-1 of Caenorhabditis elegans.